Reading from the N-terminus, the 167-residue chain is Large ribosomal subunit protein uL10 (167 aa).

It belongs to the universal ribosomal protein uL10 family. In terms of assembly, part of the ribosomal stalk of the 50S ribosomal subunit. The N-terminus interacts with L11 and the large rRNA to form the base of the stalk. The C-terminus forms an elongated spine to which L12 dimers bind in a sequential fashion forming a multimeric L10(L12)X complex.

Its function is as follows. Forms part of the ribosomal stalk, playing a central role in the interaction of the ribosome with GTP-bound translation factors. In Tolumonas auensis (strain DSM 9187 / NBRC 110442 / TA 4), this protein is Large ribosomal subunit protein uL10.